The primary structure comprises 82 residues: Hepcidin (82 aa).

An N-terminal signal peptide occupies residues 1–23 (MALSVQIRAACLLLLLLVSLTAG). A propeptide spanning residues 24-53 (SVLPSQTRQLTDLRTQDTAGATAGLTPVAQ) is cleaved from the precursor. Disulfide bonds link Cys-64/Cys-80, Cys-67/Cys-70, Cys-68/Cys-76, and Cys-71/Cys-79.

It belongs to the hepcidin family. In terms of assembly, interacts with SLC40A1; this interaction promotes SLC40A1 rapid ubiquitination.

The protein localises to the secreted. In terms of biological role, liver-produced hormone that constitutes the main circulating regulator of iron absorption and distribution across tissues. Acts by promoting endocytosis and degradation of ferroportin/SLC40A1, leading to the retention of iron in iron-exporting cells and decreased flow of iron into plasma. Controls the major flows of iron into plasma: absorption of dietary iron in the intestine, recycling of iron by macrophages, which phagocytose old erythrocytes and other cells, and mobilization of stored iron from hepatocytes. Its function is as follows. Has strong antimicrobial activity against E.coli ML35P N.cinerea and weaker against S.epidermidis, S.aureus and group b streptococcus bacteria. Active against the fungus C.albicans. No activity against P.aeruginosa. The sequence is that of Hepcidin (HAMP) from Sus scrofa (Pig).